A 502-amino-acid polypeptide reads, in one-letter code: Glycerol kinase (502 aa).

T14 is a binding site for ADP. T14, T15, and S16 together coordinate ATP. Residue T14 participates in sn-glycerol 3-phosphate binding. ADP is bound at residue R18. 3 residues coordinate sn-glycerol 3-phosphate: R84, E85, and Y136. Residues R84, E85, and Y136 each coordinate glycerol. Residue H232 is modified to Phosphohistidine; by HPr. Sn-glycerol 3-phosphate is bound at residue D246. Glycerol is bound by residues D246 and Q247. ADP-binding residues include T268 and G311. Residues T268, G311, Q315, and G412 each coordinate ATP. The ADP site is built by G412 and N416.

It belongs to the FGGY kinase family. In terms of assembly, homotetramer and homodimer (in equilibrium). In terms of processing, the phosphoenolpyruvate-dependent sugar phosphotransferase system (PTS), including enzyme I, and histidine-containing protein (HPr) are required for the phosphorylation, which leads to the activation of the enzyme.

The catalysed reaction is glycerol + ATP = sn-glycerol 3-phosphate + ADP + H(+). Its pathway is polyol metabolism; glycerol degradation via glycerol kinase pathway; sn-glycerol 3-phosphate from glycerol: step 1/1. With respect to regulation, activated by phosphorylation and inhibited by fructose 1,6-bisphosphate (FBP). Key enzyme in the regulation of glycerol uptake and metabolism. Catalyzes the phosphorylation of glycerol to yield sn-glycerol 3-phosphate. The sequence is that of Glycerol kinase from Streptococcus pneumoniae (strain 70585).